Reading from the N-terminus, the 175-residue chain is Coagulogen (175 aa).

8 cysteine pairs are disulfide-bonded: Cys-8/Cys-167, Cys-10/Cys-95, Cys-60/Cys-161, Cys-65/Cys-121, Cys-75/Cys-168, Cys-88/Cys-140, Cys-127/Cys-170, and Cys-134/Cys-172.

Belongs to the coagulin family. As to quaternary structure, coagulogen is cleaved after Arg-18 and Arg-46 by a clotting enzyme contained in the hemocyte and activated by a bacterial endotoxin (lipopolysaccharide). This cleavage releases the peptide C and leaves 2 chains of coagulin, A and B, linked by two disulfide bonds. Coagulin molecules interlink to form a gel. As to expression, hemolymph.

It localises to the secreted. Coagulogen is a gel-forming protein of hemolymph; it hinders the spread of invaders by immobilizing them. The polypeptide is Coagulogen (Tachypleus gigas (Southeast Asian horseshoe crab)).